An 89-amino-acid polypeptide reads, in one-letter code: UPF0237 protein CE1668 (89 aa).

Residues 4–78 enclose the ACT domain; sequence IMTVTGQDHT…KEQGLVIRIQ (75 aa).

Belongs to the UPF0237 family.

This chain is UPF0237 protein CE1668, found in Corynebacterium efficiens (strain DSM 44549 / YS-314 / AJ 12310 / JCM 11189 / NBRC 100395).